Here is a 268-residue protein sequence, read N- to C-terminus: Myb-related protein 315 (268 aa).

HTH myb-type domains lie at Lys9 to Leu61 and Arg62 to Leu116. DNA-binding regions (H-T-H motif) lie at residues Trp37–Leu61 and Trp89–Ile112.

In terms of tissue distribution, expressed in roots, stems, leaves, seed pods and flowers. Strongest expression in the stem.

Its subcellular location is the nucleus. In terms of biological role, transcription factor. The sequence is that of Myb-related protein 315 from Antirrhinum majus (Garden snapdragon).